Here is an 86-residue protein sequence, read N- to C-terminus: Small ribosomal subunit protein uS17 (86 aa).

It belongs to the universal ribosomal protein uS17 family. As to quaternary structure, part of the 30S ribosomal subunit.

Functionally, one of the primary rRNA binding proteins, it binds specifically to the 5'-end of 16S ribosomal RNA. In Helicobacter pylori (strain P12), this protein is Small ribosomal subunit protein uS17.